The chain runs to 970 residues: Serine/threonine-protein kinase PLK4 (970 aa).

The Protein kinase domain maps to Phe-12–Met-265. ATP contacts are provided by residues Leu-18–Val-26 and Lys-41. 2 positions are modified to N6-acetyllysine: Lys-45 and Lys-46. Asp-136 serves as the catalytic Proton acceptor. Residues Val-324–Leu-373 are disordered. Positions Lys-327 to Phe-343 are enriched in low complexity. Over residues Tyr-344–Gly-356 the composition is skewed to polar residues. A compositionally biased stretch (basic and acidic residues) spans Val-360–His-369. At Ser-401 the chain carries Phosphoserine. Residues Ile-498–Pro-540 are disordered. The segment covering Phe-504–Ser-515 has biased composition (basic and acidic residues). Polar residues predominate over residues Ala-530–Pro-540. A Cryptic POLO box 1 (CPB1) domain is found at Thr-586–Lys-699. The residue at position 665 (Ser-665) is a Phosphoserine. The 114-residue stretch at Ser-700–Pro-813 folds into the Cryptic POLO box 2 (CPB2) domain. Positions Gly-808–Arg-829 are disordered. Ser-817 carries the phosphoserine modification. A POLO box domain is found at Gln-886–Asn-964.

It belongs to the protein kinase superfamily. Ser/Thr protein kinase family. CDC5/Polo subfamily. Homodimer. Interacts with CEP152 (via N-terminus). Interacts with CEP78; this interaction may be important for proper PLK4 localization to the centriole and PLK4-induced overduplication of centrioles. Interacts with CEP131. Interacts simultaneously with TENT5C and CEP192. Interacts with TENT5C; this interaction leads to the TENT5C recruitment in the centrosome. Interacts with CEP85; this interaction may be important in cell migration and centriole assembly. Ubiquitinated; leading to its degradation by the proteasome. Deubiquitinated by USP54; leading to PLK4 stabilization. Post-translationally, tyrosine-phosphorylated by TEC. In terms of processing, acetylation by KAT2A and KAT2B impairs kinase activity by shifting the kinase to an inactive conformation.

The protein resides in the cytoplasm. It localises to the cytoskeleton. Its subcellular location is the microtubule organizing center. The protein localises to the centrosome. It is found in the centriole. The protein resides in the nucleus. It localises to the nucleolus. Its subcellular location is the cleavage furrow. The enzyme catalyses L-seryl-[protein] + ATP = O-phospho-L-seryl-[protein] + ADP + H(+). It carries out the reaction L-threonyl-[protein] + ATP = O-phospho-L-threonyl-[protein] + ADP + H(+). Its function is as follows. Serine/threonine-protein kinase that plays a central role in centriole duplication. Able to trigger procentriole formation on the surface of the parental centriole cylinder, leading to the recruitment of centriole biogenesis proteins such as SASS6, CPAP, CCP110, CEP135 and gamma-tubulin. When overexpressed, it is able to induce centrosome amplification through the simultaneous generation of multiple procentrioles adjoining each parental centriole during S phase. Phosphorylates 'Ser-151' of FBXW5 during the G1/S transition, leading to inhibit FBXW5 ability to ubiquitinate SASS6. Its central role in centriole replication suggests a possible role in tumorigenesis, centrosome aberrations being frequently observed in tumors. Also involved in deuterosome-mediated centriole amplification in multiciliated that can generate more than 100 centrioles. Also involved in trophoblast differentiation by phosphorylating HAND1, leading to disrupt the interaction between HAND1 and MDFIC and activate HAND1. Phosphorylates CDC25C and CHEK2. Required for the recruitment of STIL to the centriole and for STIL-mediated centriole amplification. Phosphorylates CEP131 and PCM1 which is essential for proper organization and integrity of centriolar satellites. This is Serine/threonine-protein kinase PLK4 from Pongo abelii (Sumatran orangutan).